We begin with the raw amino-acid sequence, 224 residues long: Probable amino-acid permease protein YxeN (224 aa).

The next 6 membrane-spanning stretches (helical) occupy residues 3–23, 24–44, 58–78, 91–111, 157–177, and 190–210; these read TIDWEFMISAFPTLIQALPIT, LFMAIAAMIFAIIGGLILALI, LYISFFRGVPTLVQLFLIYYG, ALTAAIIGLSLKNAAYLAEIF, FIGLLKETSLAFTLGVMEMFA, and FETYLAVAIVYWVLTIIYSIL. Residues 20–211 enclose the ABC transmembrane type-1 domain; it reads LPITLFMAIA…VLTIIYSILQ (192 aa).

It belongs to the binding-protein-dependent transport system permease family. In terms of assembly, the complex is composed of two ATP-binding proteins (YxeO), two transmembrane proteins (YxeN) and a solute-binding protein (YxeM).

Its subcellular location is the cell membrane. In terms of biological role, probably part of the ABC transporter complex YxeMNO that could be involved in amino-acid import. May transport S-methylcysteine. Probably responsible for the translocation of the substrate across the membrane. The protein is Probable amino-acid permease protein YxeN (yxeN) of Bacillus subtilis (strain 168).